A 342-amino-acid chain; its full sequence is MTYSIAILGASGYTGAELIRLIAGHSALKITALGAFSKAGQSVAQVFPHLRHLDLPALLQIDQIDFANIDLCFCALPHKTSQEVIAALPSDLKVVDLSADFRLRDPDAYEKWYGNKHAALKQQAEAVYGLTEFYRDDIKTARLVAGTGCNAATGQYMLRPLITAGVIDLDDIILDLKCAVSGAGRSLKENLLHAELSEGYHAYATGSTHRHLGEFDQEFSKLAGRPVQIQFTPHLIPANRGILGTGYLRGEAAQIHDTLSQAYANEPFIDVLPFGETPSTRHVRGSNFCHIGVVADRQPGRALVVAALDNLTKGSSGQALQNANLMLNIKETEGLMMPPLFP.

Residue Cys149 is part of the active site.

This sequence belongs to the NAGSA dehydrogenase family. Type 1 subfamily.

Its subcellular location is the cytoplasm. The enzyme catalyses N-acetyl-L-glutamate 5-semialdehyde + phosphate + NADP(+) = N-acetyl-L-glutamyl 5-phosphate + NADPH + H(+). It functions in the pathway amino-acid biosynthesis; L-arginine biosynthesis; N(2)-acetyl-L-ornithine from L-glutamate: step 3/4. Catalyzes the NADPH-dependent reduction of N-acetyl-5-glutamyl phosphate to yield N-acetyl-L-glutamate 5-semialdehyde. The polypeptide is N-acetyl-gamma-glutamyl-phosphate reductase (Roseobacter denitrificans (strain ATCC 33942 / OCh 114) (Erythrobacter sp. (strain OCh 114))).